Reading from the N-terminus, the 645-residue chain is Acetyl-coenzyme A synthetase (645 aa).

Residues 190 to 193 and Thr308 contribute to the CoA site; that span reads RGGR. Residues 384–386, 408–413, Asp497, and Arg512 contribute to the ATP site; these read GEP and DTWWQT. A CoA-binding site is contributed by Ser520. Arg523 serves as a coordination point for ATP. Residues Val534, His536, and Val539 each coordinate Mg(2+). The residue at position 606 (Lys606) is an N6-acetyllysine.

It belongs to the ATP-dependent AMP-binding enzyme family. Mg(2+) is required as a cofactor. Acetylated. Deacetylation by the SIR2-homolog deacetylase activates the enzyme.

It carries out the reaction acetate + ATP + CoA = acetyl-CoA + AMP + diphosphate. Catalyzes the conversion of acetate into acetyl-CoA (AcCoA), an essential intermediate at the junction of anabolic and catabolic pathways. AcsA undergoes a two-step reaction. In the first half reaction, AcsA combines acetate with ATP to form acetyl-adenylate (AcAMP) intermediate. In the second half reaction, it can then transfer the acetyl group from AcAMP to the sulfhydryl group of CoA, forming the product AcCoA. The protein is Acetyl-coenzyme A synthetase of Saccharophagus degradans (strain 2-40 / ATCC 43961 / DSM 17024).